Here is a 308-residue protein sequence, read N- to C-terminus: MKLQKSELPALLERIYSEVTPLYGVGKTADYIPPLSRVNPRQFGMAIRFVDGDEFTVGQASTPFSIQSISKLFALMLALDIVGDDLWKRVGREPSGMRFNSLLQLENENGIPRNPFINAGAIVVTDTIVNHSASPVKRLEQFMASLSGNVFNRYDPEVYVAEARTGYRNAAIANLLKALGNLEGEVDVVLDSYYKQCSMTMSCLDLARATESLANKGKSSFRTQFHGERMDKRVNALMLTCGLYDAAGNFAYQVGLPAKSGVGGGIVAVLPGYFSVAVWSPELDSYGNSVLGQKALELLTHYTSSSIF.

Residues S68, N118, E162, N169, Y193, Y244, and V262 each coordinate substrate.

Belongs to the glutaminase family. In terms of assembly, homotetramer.

The catalysed reaction is L-glutamine + H2O = L-glutamate + NH4(+). The polypeptide is Glutaminase (Hahella chejuensis (strain KCTC 2396)).